Consider the following 124-residue polypeptide: Large ribosomal subunit protein bL12 (124 aa).

It belongs to the bacterial ribosomal protein bL12 family. As to quaternary structure, homodimer. Part of the ribosomal stalk of the 50S ribosomal subunit. Forms a multimeric L10(L12)X complex, where L10 forms an elongated spine to which 2 to 4 L12 dimers bind in a sequential fashion. Binds GTP-bound translation factors.

Its function is as follows. Forms part of the ribosomal stalk which helps the ribosome interact with GTP-bound translation factors. Is thus essential for accurate translation. This is Large ribosomal subunit protein bL12 from Liberibacter africanus subsp. capensis.